Here is a 229-residue protein sequence, read N- to C-terminus: Urease accessory protein UreF (229 aa).

This sequence belongs to the UreF family. In terms of assembly, ureD, UreF and UreG form a complex that acts as a GTP-hydrolysis-dependent molecular chaperone, activating the urease apoprotein by helping to assemble the nickel containing metallocenter of UreC. The UreE protein probably delivers the nickel.

The protein localises to the cytoplasm. Required for maturation of urease via the functional incorporation of the urease nickel metallocenter. This chain is Urease accessory protein UreF, found in Trichormus variabilis (strain ATCC 29413 / PCC 7937) (Anabaena variabilis).